Consider the following 341-residue polypeptide: Ribosomal RNA small subunit methyltransferase H (341 aa).

Residues 47-49 (GGY), D64, F91, D109, and Q116 each bind S-adenosyl-L-methionine.

It belongs to the methyltransferase superfamily. RsmH family.

It is found in the cytoplasm. It catalyses the reaction cytidine(1402) in 16S rRNA + S-adenosyl-L-methionine = N(4)-methylcytidine(1402) in 16S rRNA + S-adenosyl-L-homocysteine + H(+). Specifically methylates the N4 position of cytidine in position 1402 (C1402) of 16S rRNA. The sequence is that of Ribosomal RNA small subunit methyltransferase H from Rhizobium johnstonii (strain DSM 114642 / LMG 32736 / 3841) (Rhizobium leguminosarum bv. viciae).